Here is a 353-residue protein sequence, read N- to C-terminus: Peroxidase 34 (353 aa).

Residues 1–30 (MHFSSSSTSSTWTILITLGCLMLHASLSAA) form the signal peptide. A Pyrrolidone carboxylic acid modification is found at Gln-31. 4 cysteine pairs are disulfide-bonded: Cys-41-Cys-121, Cys-74-Cys-79, Cys-127-Cys-331, and Cys-207-Cys-239. An N-linked (GlcNAc...) asparagine glycan is attached at Asn-43. The active-site Proton acceptor is His-72. Ca(2+)-binding residues include Asp-73, Val-76, Gly-78, Asp-80, and Ser-82. Residue Asn-87 is glycosylated (N-linked (GlcNAc...) asparagine). Substrate is bound at residue Pro-169. Residue His-200 coordinates heme b. Thr-201 serves as a coordination point for Ca(2+). N-linked (GlcNAc...) asparagine glycans are attached at residues Asn-216, Asn-228, and Asn-244. Ca(2+)-binding residues include Asp-252, Thr-255, and Asp-260. Asn-285 carries an N-linked (GlcNAc...) asparagine glycan.

Belongs to the peroxidase family. Classical plant (class III) peroxidase subfamily. Heme b is required as a cofactor. It depends on Ca(2+) as a cofactor. In terms of tissue distribution, preferentially expressed in roots, but also detected in flowers, leaves and stems.

It localises to the secreted. It is found in the vacuole. The catalysed reaction is 2 a phenolic donor + H2O2 = 2 a phenolic radical donor + 2 H2O. In terms of biological role, removal of H(2)O(2), oxidation of toxic reductants, biosynthesis and degradation of lignin, suberization, auxin catabolism, response to environmental stresses such as wounding, pathogen attack and oxidative stress. These functions might be dependent on each isozyme/isoform in each plant tissue. Its function is as follows. May be implicated in the systemic acquired resistance response via the salicylic acid signal transduction pathway. Exhibits a Ca(2+)-pectate binding affinity which could be interpreted in vivo as a specificity to interact with the pectic structure of the cell wall. In Arabidopsis thaliana (Mouse-ear cress), this protein is Peroxidase 34 (PER34).